A 359-amino-acid polypeptide reads, in one-letter code: Small ribosomal subunit biogenesis GTPase RsgA (359 aa).

Residues 101–259 (KRKGSQAIAS…LMDNPGIREV (159 aa)) form the CP-type G domain. GTP-binding positions include 149-152 (NKKD) and 201-209 (GSSGAGKST). The Zn(2+) site is built by Cys284, Cys289, His291, and Cys297. The disordered stretch occupies residues 331 to 359 (DPEEARKKKQKDKQMSKALQKRLKDKGRK). The segment covering 349-359 (LQKRLKDKGRK) has biased composition (basic residues).

This sequence belongs to the TRAFAC class YlqF/YawG GTPase family. RsgA subfamily. In terms of assembly, monomer. Associates with 30S ribosomal subunit, binds 16S rRNA. Zn(2+) serves as cofactor.

The protein resides in the cytoplasm. Its function is as follows. One of several proteins that assist in the late maturation steps of the functional core of the 30S ribosomal subunit. Helps release RbfA from mature subunits. May play a role in the assembly of ribosomal proteins into the subunit. Circularly permuted GTPase that catalyzes slow GTP hydrolysis, GTPase activity is stimulated by the 30S ribosomal subunit. The protein is Small ribosomal subunit biogenesis GTPase RsgA of Leptospira interrogans serogroup Icterohaemorrhagiae serovar copenhageni (strain Fiocruz L1-130).